The primary structure comprises 58 residues: Large ribosomal subunit protein uL30 (58 aa).

Belongs to the universal ribosomal protein uL30 family. Part of the 50S ribosomal subunit.

This is Large ribosomal subunit protein uL30 from Vibrio campbellii (strain ATCC BAA-1116).